A 152-amino-acid chain; its full sequence is Transcriptional regulator MraZ (152 aa).

2 consecutive SpoVT-AbrB domains span residues 5–52 and 81–124; these read ASAI…PLEA and AHEC…DEAA.

Belongs to the MraZ family. In terms of assembly, forms oligomers.

The protein localises to the cytoplasm. It localises to the nucleoid. This is Transcriptional regulator MraZ from Shewanella loihica (strain ATCC BAA-1088 / PV-4).